The following is a 377-amino-acid chain: Chaperone protein DnaJ (377 aa).

Residues 4-69 enclose the J domain; sequence DYYEALGVER…QKRAAYDRFG (66 aa). The segment at 135–213 adopts a CR-type zinc-finger fold; the sequence is GKTAQIRVPT…CHGQGRVTQE (79 aa). Zn(2+) contacts are provided by Cys-148, Cys-151, Cys-165, Cys-168, Cys-187, Cys-190, Cys-201, and Cys-204. CXXCXGXG motif repeat units lie at residues 148 to 155, 165 to 172, 187 to 194, and 201 to 208; these read CDECSGSG, CTMCSGSG, CPTCNGRG, and CGKCHGQG.

Belongs to the DnaJ family. In terms of assembly, homodimer. It depends on Zn(2+) as a cofactor.

The protein localises to the cytoplasm. Participates actively in the response to hyperosmotic and heat shock by preventing the aggregation of stress-denatured proteins and by disaggregating proteins, also in an autonomous, DnaK-independent fashion. Unfolded proteins bind initially to DnaJ; upon interaction with the DnaJ-bound protein, DnaK hydrolyzes its bound ATP, resulting in the formation of a stable complex. GrpE releases ADP from DnaK; ATP binding to DnaK triggers the release of the substrate protein, thus completing the reaction cycle. Several rounds of ATP-dependent interactions between DnaJ, DnaK and GrpE are required for fully efficient folding. Also involved, together with DnaK and GrpE, in the DNA replication of plasmids through activation of initiation proteins. This Brucella anthropi (strain ATCC 49188 / DSM 6882 / CCUG 24695 / JCM 21032 / LMG 3331 / NBRC 15819 / NCTC 12168 / Alc 37) (Ochrobactrum anthropi) protein is Chaperone protein DnaJ.